The primary structure comprises 139 residues: Ribonuclease VapC39 (139 aa).

The PINc domain occupies 4 to 133; the sequence is LLDVNVLIAL…DAALADSASA (130 aa). Mg(2+)-binding residues include D6 and D106.

It belongs to the PINc/VapC protein family. Mg(2+) is required as a cofactor.

Toxic component of a type II toxin-antitoxin (TA) system. An RNase. Its toxic effect is neutralized by coexpression with cognate antitoxin VapB39. The polypeptide is Ribonuclease VapC39 (Mycobacterium tuberculosis (strain CDC 1551 / Oshkosh)).